The following is an 820-amino-acid chain: Catenin beta (820 aa).

The span at 1–16 shows a compositional bias: polar residues; that stretch reads MEQARYSNQQSVNPQQ. The segment at 1-74 is disordered; the sequence is MEQARYSNQQ…SRHEDGGEEA (74 aa). Positions 52-63 are enriched in low complexity; it reads SSATSHPPSVSS. 10 ARM repeats span residues 157–196, 199–239, 241–280, 283–322, 367–405, 406–445, 448–489, 495–535, 603–642, and 644–683; these read NYQD…QLSK, ASRH…NLSH, RAGL…NLLL, EGSK…ILAY, HNNK…RNLS, DCHR…NLTC, SRNK…HVTS, EMGQ…NLAL, SHNR…ELSL, and KQGA…RMSD. The tract at residues 708–811 is disordered; it reads PWGDPLDMPS…LDSIPPADNT (104 aa). Over residues 785–796 the composition is skewed to low complexity; that stretch reads GMDPGLPDMGPP.

It belongs to the beta-catenin family.

It is found in the cytoplasm. Its subcellular location is the cytoskeleton. In terms of biological role, binds to the cytoplasmic domain of the cell-cell adhesion molecule E-cadherin, and perhaps to other (membrane) proteins. The association of catenins to cadherins produces a complex which is linked to the actin filament network, and which seems to be of primary importance for cadherins cell-adhesion properties. The sequence is that of Catenin beta from Tripneustes gratilla (Hawaian sea urchin).